The following is a 671-amino-acid chain: Carbohydrate acetyl esterase/feruloyl esterase (671 aa).

The first 24 residues, 1–24 (MYQSTLKTILLASALLILPASMSA), serve as a signal peptide directing secretion. Residues 1–296 (MYQSTLKTIL…YGEAVARHLG (296 aa)) are carbohydrate acetyl esterase. Residues Ser55, Asp271, and His274 each act as for acetyl esterase activity in the active site. Residues 297-671 (YEPKRPYIEM…NEFIPHLFKK (375 aa)) are feruloyl esterase.

This sequence in the N-terminal section; belongs to the carbohydrate esterase 6 family.

The enzyme catalyses feruloyl-polysaccharide + H2O = ferulate + polysaccharide.. It functions in the pathway glycan degradation; xylan degradation. Its function is as follows. Involved in degradation of plant cell wall polysaccharides. Bifunctional esterase that possesses both acetyl esterase and ferulic acid esterase activities. Has deacetylase activity towards acetylated xylo-oligosaccharides smaller than xylo-heptaose, as well as from glucose-pentaacetate. Is also able to release ferulic acid from methylferulate, and from the more natural substrates wheat bran, corn fiber, and XOS(FA,Ac), a corn fiber-derived substrate enriched in O-acetyl and ferulic acid esters. The chain is Carbohydrate acetyl esterase/feruloyl esterase from Xylanibacter ruminicola (strain ATCC 19189 / DSM 19721 / CIP 105475 / JCM 8958 / 23) (Prevotella ruminicola).